A 64-amino-acid chain; its full sequence is MLLDEKLDKLMKTILRLKAYKEEENLRRVIGEFHSIIDYAYEGMYIAEDMLREEESKGKEVSTY.

This chain is SPbeta prophage-derived uncharacterized protein YopV (yopV), found in Bacillus subtilis (strain 168).